Consider the following 350-residue polypeptide: Transmembrane protein 185A (350 aa).

The next 7 helical transmembrane spans lie at 16 to 36 (LIYA…DGII), 41 to 61 (WAVF…ASVG), 81 to 101 (FKAM…EVLV), 111 to 131 (FWLL…AACV), 177 to 197 (ILMS…VLFL), 211 to 231 (ITMA…EILL), and 240 to 260 (AFSC…LMAT). The interval 298–350 (DLHHEDSEETEETPVPEPPKIAPMFRKKARVVITQSPGKYVLPPPKLNIEMPD) is mediates interaction with MAP1B.

This sequence belongs to the TMEM185 family. As to quaternary structure, interacts with MAP1B. In terms of tissue distribution, broadly expressed in brain where it is specifically expressed by neurons (at protein level). Also detected in some cells of arterioles, intestine, lung and testis (at protein level).

The protein resides in the cell projection. The protein localises to the dendrite. It localises to the membrane. The protein is Transmembrane protein 185A (Tmem185a) of Mus musculus (Mouse).